Reading from the N-terminus, the 265-residue chain is U6 snRNA phosphodiesterase 1 (265 aa).

The interval 1 to 67 (MSAAPLVGYS…EGPVDDSAKH (67 aa)) is disordered. Positions 20–32 (AGARVRPGAEGRS) are enriched in basic and acidic residues. H120 functions as the Proton acceptor in the catalytic mechanism. AMP is bound at residue 120–122 (HLS). UMP is bound by residues Q164, Y202, and 206–210 (SFHIS). AMP-binding positions include Y202 and 204-210 (DPSFHIS). The active-site Proton donor is H208.

Belongs to the 2H phosphoesterase superfamily. USB1 family. In terms of assembly, interacts with PLRG1, CDC5L and PRPF19.

Its subcellular location is the nucleus. It catalyses the reaction a 3'-end uridylyl-uridine-RNA = a 3'-end 2',3'-cyclophospho-uridine-RNA + uridine. The enzyme catalyses a 3'-end uridylyl-adenosine-RNA = a 3'-end 2',3'-cyclophospho-uridine-RNA + adenosine. Its function is as follows. 3'-5' RNA exonuclease that trims the 3' end of oligo(U) and oligo(A) tracts of the pre-U6 small nuclear RNA (snRNA) molecule, leading to the formation of a mature U6 snRNA 3' end-terminated with a 2',3'-cyclic phosphate. Participates in the U6 snRNA 3' end processing that prevents U6 snRNA degradation. In addition also removes uridines from the 3' end of U6atac snRNA and possibly the vault RNA VTRNA1-1. The sequence is that of U6 snRNA phosphodiesterase 1 from Bos taurus (Bovine).